The following is a 296-amino-acid chain: Cytidine deaminase (296 aa).

2 CMP/dCMP-type deaminase domains span residues 52-172 and 191-296; these read TAVE…FGPK and THAD…YFAL. 93 to 95 contributes to the substrate binding site; it reads NQE. Residue H106 coordinates Zn(2+). E108 functions as the Proton donor in the catalytic mechanism. Zn(2+)-binding residues include C133 and C136.

Belongs to the cytidine and deoxycytidylate deaminase family. As to quaternary structure, homodimer. Zn(2+) is required as a cofactor.

It catalyses the reaction cytidine + H2O + H(+) = uridine + NH4(+). The catalysed reaction is 2'-deoxycytidine + H2O + H(+) = 2'-deoxyuridine + NH4(+). Its function is as follows. This enzyme scavenges exogenous and endogenous cytidine and 2'-deoxycytidine for UMP synthesis. In Actinobacillus succinogenes (strain ATCC 55618 / DSM 22257 / CCUG 43843 / 130Z), this protein is Cytidine deaminase.